A 367-amino-acid polypeptide reads, in one-letter code: Quinolinate synthase (367 aa).

H45 and S62 together coordinate iminosuccinate. Residue C109 coordinates [4Fe-4S] cluster. Iminosuccinate is bound by residues 140-142 (YVN) and S161. C229 is a [4Fe-4S] cluster binding site. Residues 255–257 (HPE) and T272 each bind iminosuccinate. C319 is a [4Fe-4S] cluster binding site.

Belongs to the quinolinate synthase family. Type 3 subfamily. Requires [4Fe-4S] cluster as cofactor.

It localises to the cytoplasm. It carries out the reaction iminosuccinate + dihydroxyacetone phosphate = quinolinate + phosphate + 2 H2O + H(+). It functions in the pathway cofactor biosynthesis; NAD(+) biosynthesis; quinolinate from iminoaspartate: step 1/1. Functionally, catalyzes the condensation of iminoaspartate with dihydroxyacetone phosphate to form quinolinate. This Geobacillus kaustophilus (strain HTA426) protein is Quinolinate synthase.